A 324-amino-acid chain; its full sequence is Elongation factor P--(R)-beta-lysine ligase (324 aa).

75 to 77 provides a ligand contact to substrate; it reads SPE. ATP-binding positions include 99-101 and N108; that span reads RNE. Residue Y117 coordinates substrate. 243–244 contributes to the ATP binding site; it reads EL. Residue E250 coordinates substrate. Residue G299 coordinates ATP.

It belongs to the class-II aminoacyl-tRNA synthetase family. EpmA subfamily. As to quaternary structure, homodimer.

The enzyme catalyses D-beta-lysine + L-lysyl-[protein] + ATP = N(6)-((3R)-3,6-diaminohexanoyl)-L-lysyl-[protein] + AMP + diphosphate + H(+). With EpmB is involved in the beta-lysylation step of the post-translational modification of translation elongation factor P (EF-P). Catalyzes the ATP-dependent activation of (R)-beta-lysine produced by EpmB, forming a lysyl-adenylate, from which the beta-lysyl moiety is then transferred to the epsilon-amino group of a conserved specific lysine residue in EF-P. This is Elongation factor P--(R)-beta-lysine ligase from Vibrio cholerae serotype O1 (strain ATCC 39315 / El Tor Inaba N16961).